A 119-amino-acid polypeptide reads, in one-letter code: Protein SPIRAL1 (119 aa).

Residues 1 to 11 show a composition bias toward gly residues; sequence MGRGNSCGGGQ. 2 disordered regions span residues 1 to 47 and 85 to 105; these read MGRG…PPVT and EGQN…HAAP. Residues 24–34 are compositionally biased toward pro residues; it reads APKPVPAPRPA.

The protein belongs to the SPIRAL1 family. Post-translationally, ubiquitinated. Upon salt-stress induction, it is subject to proteasome-dependent degradation. In terms of tissue distribution, ubiquitous. High expression was associated with tissues undergoing rapid cell expansion, including the root elongation zone, hypocotyls of dark grown-seedlings, and cotyledons of light-grown seedlings.

Its subcellular location is the cytoplasm. The protein localises to the cytoskeleton. It is found in the phragmoplast. It localises to the spindle. Functionally, required for directional control of cell elongation. Stabilizes growing ends of cortical microtubules and influences their dynamic properties. Acts redundantly with SP1Ls in maintaining the cortical microtubules organization essential for anisotropic cell growth. Plays a key role in salt stress-induced microtubules disassembly. This is Protein SPIRAL1 (SPR1) from Arabidopsis thaliana (Mouse-ear cress).